A 264-amino-acid chain; its full sequence is MKQYLELMQKVLDEGTQKNDRTGTGTLSIFGHQMRFNLQEGFPLVTTKRCHLRSIIHELLWFLQGDTNIAYLHENNVTIWDEWADENGDLGPVYGKQWRAWPTPDGRHIDQIATVLSQLKNDPDSRRIIVSAWNVGELDKMALAPCHAFFQFYVADGKLSCQLYQRSCDVFLGLPFNIASYALLVHMMAQQCDLDVGDFVWTGGDTHLYSNHMEQTHLQLSREPRALPKLVIKRKPDSLFDYRFDDFEIEGYDPHPGIKAPVAI.

Arginine 21 is a binding site for dUMP. Histidine 51 contacts (6R)-5,10-methylene-5,6,7,8-tetrahydrofolate. 126-127 contacts dUMP; the sequence is RR. The Nucleophile role is filled by cysteine 146. Residues 166–169, asparagine 177, and 207–209 contribute to the dUMP site; these read RSCD and HLY. Position 169 (aspartate 169) interacts with (6R)-5,10-methylene-5,6,7,8-tetrahydrofolate. Residue alanine 263 coordinates (6R)-5,10-methylene-5,6,7,8-tetrahydrofolate.

The protein belongs to the thymidylate synthase family. Bacterial-type ThyA subfamily. In terms of assembly, homodimer.

The protein resides in the cytoplasm. It catalyses the reaction dUMP + (6R)-5,10-methylene-5,6,7,8-tetrahydrofolate = 7,8-dihydrofolate + dTMP. The protein operates within pyrimidine metabolism; dTTP biosynthesis. Its function is as follows. Catalyzes the reductive methylation of 2'-deoxyuridine-5'-monophosphate (dUMP) to 2'-deoxythymidine-5'-monophosphate (dTMP) while utilizing 5,10-methylenetetrahydrofolate (mTHF) as the methyl donor and reductant in the reaction, yielding dihydrofolate (DHF) as a by-product. This enzymatic reaction provides an intracellular de novo source of dTMP, an essential precursor for DNA biosynthesis. This chain is Thymidylate synthase, found in Salmonella typhimurium (strain LT2 / SGSC1412 / ATCC 700720).